We begin with the raw amino-acid sequence, 663 residues long: Inner nuclear membrane protein HEH2 (663 aa).

Disordered regions lie at residues 46–188 (QRLQ…ELPN) and 267–289 (ISET…KNIR). Residues 47 to 62 (RLQSSPEASKVRTSIQ) are compositionally biased toward polar residues. The span at 91–123 (KTVKDENVETNKRKREQISTDNEAKMQIQEEKS) shows a compositional bias: basic and acidic residues. Phosphoserine is present on S123. The span at 124-134 (PKKKRKKRSSK) shows a compositional bias: basic residues. The Nuclear localization signal motif lies at 124–137 (PKKKRKKRSSKANK). Residues 164-183 (EELHKKDSSDDKPRVKELPK) are compositionally biased toward basic and acidic residues. The helical transmembrane segment at 317 to 337 (LFIWLWNGAIFLSIICPILFG) threads the bilayer.

In terms of assembly, interacts with SRP1.

Its subcellular location is the nucleus inner membrane. The chain is Inner nuclear membrane protein HEH2 (HEH2) from Saccharomyces cerevisiae (strain ATCC 204508 / S288c) (Baker's yeast).